Reading from the N-terminus, the 731-residue chain is E3 ubiquitin-protein ligase SMURF1 (731 aa).

The C2 domain occupies 1–120; that stretch reads MSNPGTRRNG…TGYQRLDLCK (120 aa). Ser200 carries the phosphoserine modification. Positions 216 to 237 are disordered; that stretch reads EVRGPLQTPQNRPHGHQSPELP. WW domains are found at residues 234–267 and 280–313; these read PELP…DPRI and GPLP…DPRL. Glycyl lysine isopeptide (Lys-Gly) (interchain with G-Cter in ubiquitin) cross-links involve residues Lys355 and Lys357. The region spanning 394–731 is the HECT domain; it reads RPKDLKKRLM…VEETCGFAVE (338 aa). Cys699 functions as the Glycyl thioester intermediate in the catalytic mechanism.

As to quaternary structure, interacts with TRAF4. Interacts (via HECT domain) with FBXL15 (via LRR repeats). Interacts with SMAD7 and TGFBR1; SMAD7 recruits SMURF1 to TGFBR1 and regulates TGF-beta receptor degradation. Interacts with MAVS; the interaction is mediated by NDFIP1. Auto-ubiquitinated in presence of NDFIP1. Ubiquitinated by the SCF(FBXL15) complex at Lys-355 and Lys-357, leading to its degradation by the proteasome. Lys-357 is the primary ubiquitination site.

The protein localises to the cytoplasm. It localises to the cell membrane. The catalysed reaction is S-ubiquitinyl-[E2 ubiquitin-conjugating enzyme]-L-cysteine + [acceptor protein]-L-lysine = [E2 ubiquitin-conjugating enzyme]-L-cysteine + N(6)-ubiquitinyl-[acceptor protein]-L-lysine.. The protein operates within protein modification; protein ubiquitination. E3 ubiquitin-protein ligase that acts as a negative regulator of BMP signaling pathway. Mediates ubiquitination and degradation of SMAD1 and SMAD5, 2 receptor-regulated SMADs specific for the BMP pathway. Promotes ubiquitination and subsequent proteasomal degradation of TRAF family members and RHOA. Promotes ubiquitination and subsequent proteasomal degradation of MAVS. Acts as an antagonist of TGF-beta signaling by ubiquitinating TGFBR1 and targeting it for degradation. Plays a role in dendrite formation by melanocytes. The sequence is that of E3 ubiquitin-protein ligase SMURF1 (Smurf1) from Mus musculus (Mouse).